We begin with the raw amino-acid sequence, 182 residues long: uncharacterized protein (182 aa).

It to H.pylori HP0274.

This is an uncharacterized protein from Methanocaldococcus jannaschii (strain ATCC 43067 / DSM 2661 / JAL-1 / JCM 10045 / NBRC 100440) (Methanococcus jannaschii).